Consider the following 256-residue polypeptide: Acetylglutamate kinase (256 aa).

Substrate contacts are provided by residues 40-41, arginine 62, and asparagine 154; that span reads GG.

The protein belongs to the acetylglutamate kinase family. ArgB subfamily.

The protein localises to the cytoplasm. The catalysed reaction is N-acetyl-L-glutamate + ATP = N-acetyl-L-glutamyl 5-phosphate + ADP. It functions in the pathway amino-acid biosynthesis; L-arginine biosynthesis; N(2)-acetyl-L-ornithine from L-glutamate: step 2/4. Catalyzes the ATP-dependent phosphorylation of N-acetyl-L-glutamate. The sequence is that of Acetylglutamate kinase from Staphylococcus aureus (strain bovine RF122 / ET3-1).